Reading from the N-terminus, the 274-residue chain is Kit ligand (274 aa).

The first 25 residues, 1 to 25 (MKKTQTWIITCIYLQLLLFNPLVRT), serve as a signal peptide directing secretion. Residues 26 to 215 (KGICRNRVTD…ANPLGDSNLQ (190 aa)) lie on the Extracellular side of the membrane. Disulfide bonds link Cys29–Cys114 and Cys68–Cys164. Residues Asn90, Asn97, Asn145, and Asn196 are each glycosylated (N-linked (GlcNAc...) asparagine). Residues 216–238 (WAAMALPAFFSLVIGFAFGALYW) traverse the membrane as a helical segment. Over 239–274 (KKKQPNLTRTAENIQINEEDNEISMLQEKEREFQEV) the chain is Cytoplasmic.

It belongs to the SCF family. Homodimer, non-covalently linked. Heterotetramer with KIT, binding two KIT molecules; thereby mediates KIT dimerization and subsequent activation by autophosphorylation. In terms of processing, a soluble form is produced by proteolytic processing of isoform 1 in the extracellular domain.

Its subcellular location is the cytoplasm. It localises to the cytoskeleton. The protein localises to the cell membrane. It is found in the cell projection. The protein resides in the lamellipodium. Its subcellular location is the filopodium. It localises to the secreted. In terms of biological role, ligand for the receptor-type protein-tyrosine kinase KIT. Plays an essential role in the regulation of cell survival and proliferation, hematopoiesis, stem cell maintenance, gametogenesis, mast cell development, migration and function, and in melanogenesis. KITLG/SCF binding can activate several signaling pathways. Promotes phosphorylation of PIK3R1, the regulatory subunit of phosphatidylinositol 3-kinase, and subsequent activation of the kinase AKT1. KITLG/SCF and KIT also transmit signals via GRB2 and activation of RAS, RAF1 and the MAP kinases MAPK1/ERK2 and/or MAPK3/ERK1. KITLG/SCF and KIT promote activation of STAT family members STAT1, STAT3 and STAT5. KITLG/SCF and KIT promote activation of PLCG1, leading to the production of the cellular signaling molecules diacylglycerol and inositol 1,4,5-trisphosphate. KITLG/SCF acts synergistically with other cytokines, probably interleukins. This is Kit ligand (KITLG) from Neovison vison (American mink).